Consider the following 238-residue polypeptide: Phosphoribosylaminoimidazole-succinocarboxamide synthase (238 aa).

It belongs to the SAICAR synthetase family.

The catalysed reaction is 5-amino-1-(5-phospho-D-ribosyl)imidazole-4-carboxylate + L-aspartate + ATP = (2S)-2-[5-amino-1-(5-phospho-beta-D-ribosyl)imidazole-4-carboxamido]succinate + ADP + phosphate + 2 H(+). Its pathway is purine metabolism; IMP biosynthesis via de novo pathway; 5-amino-1-(5-phospho-D-ribosyl)imidazole-4-carboxamide from 5-amino-1-(5-phospho-D-ribosyl)imidazole-4-carboxylate: step 1/2. The protein is Phosphoribosylaminoimidazole-succinocarboxamide synthase of Alcanivorax borkumensis (strain ATCC 700651 / DSM 11573 / NCIMB 13689 / SK2).